A 377-amino-acid polypeptide reads, in one-letter code: Bradyzoite pseudokinase 1 (377 aa).

An N-terminal signal peptide occupies residues 1–26 (MANTSVRRRQLLSSVLLLQWLTTVLG). The disordered stretch occupies residues 39–58 (HGQFPSLRRTEGVSQSGSGH). The Protein kinase domain maps to 48 to 354 (TEGVSQSGSG…IEEIMKDPLF (307 aa)).

Belongs to the protein kinase superfamily. STE Ser/Thr protein kinase family. WNG subfamily. In terms of assembly, forms a complex composed of BPK1, MCP4, MAG1, GRA8 and GRA9. Interacts with MCP4. Interacts with MAG1. Interacts with GRA8. Interacts with GRA9.

The protein resides in the secreted. Required for the growth, maintenance, and/or stability, and thus infectivity, of bradyzoite cysts. This chain is Bradyzoite pseudokinase 1, found in Toxoplasma gondii.